A 216-amino-acid chain; its full sequence is FMN-dependent NADH:quinone oxidoreductase 2 (216 aa).

FMN is bound by residues S9, 15 to 17 (SVS), 96 to 99 (MYNF), and 140 to 143 (SRGG).

It belongs to the azoreductase type 1 family. As to quaternary structure, homodimer. FMN is required as a cofactor.

The enzyme catalyses 2 a quinone + NADH + H(+) = 2 a 1,4-benzosemiquinone + NAD(+). It carries out the reaction N,N-dimethyl-1,4-phenylenediamine + anthranilate + 2 NAD(+) = 2-(4-dimethylaminophenyl)diazenylbenzoate + 2 NADH + 2 H(+). Its function is as follows. Quinone reductase that provides resistance to thiol-specific stress caused by electrophilic quinones. Functionally, also exhibits azoreductase activity. Catalyzes the reductive cleavage of the azo bond in aromatic azo compounds to the corresponding amines. The chain is FMN-dependent NADH:quinone oxidoreductase 2 from Xanthomonas axonopodis pv. citri (strain 306).